Reading from the N-terminus, the 277-residue chain is 4-deoxy-L-threo-5-hexosulose-uronate ketol-isomerase (277 aa).

Zn(2+) is bound by residues His195, His197, Glu202, and His244.

This sequence belongs to the KduI family. Zn(2+) is required as a cofactor.

The catalysed reaction is 5-dehydro-4-deoxy-D-glucuronate = 3-deoxy-D-glycero-2,5-hexodiulosonate. Its pathway is glycan metabolism; pectin degradation; 2-dehydro-3-deoxy-D-gluconate from pectin: step 4/5. Catalyzes the isomerization of 5-dehydro-4-deoxy-D-glucuronate to 3-deoxy-D-glycero-2,5-hexodiulosonate. The sequence is that of 4-deoxy-L-threo-5-hexosulose-uronate ketol-isomerase from Oceanobacillus iheyensis (strain DSM 14371 / CIP 107618 / JCM 11309 / KCTC 3954 / HTE831).